Reading from the N-terminus, the 66-residue chain is Large ribosomal subunit protein uL29 (66 aa).

It belongs to the universal ribosomal protein uL29 family.

In Geobacillus thermodenitrificans (strain NG80-2), this protein is Large ribosomal subunit protein uL29.